Here is a 141-residue protein sequence, read N- to C-terminus: MSFIQEFKEFAMRGNVIDLAVGVIIGGAFGKIVDSLVKDVVMPIVGRLVGGVDFRHLYVNLGSQQYETLEAAEKAGAPLVKYGAFINTTIDFLIIALAIFVAIKAINKLKRSEPPAPAPEPAPEPEDIKLLREIRDALKQR.

2 helical membrane-spanning segments follow: residues 16–36 (VIDL…VDSL) and 83–103 (GAFI…FVAI).

It belongs to the MscL family. In terms of assembly, homopentamer.

The protein localises to the cell inner membrane. In terms of biological role, channel that opens in response to stretch forces in the membrane lipid bilayer. May participate in the regulation of osmotic pressure changes within the cell. In Azoarcus sp. (strain BH72), this protein is Large-conductance mechanosensitive channel.